Consider the following 92-residue polypeptide: Putative regulatory protein CTN_0877 (92 aa).

This sequence belongs to the RemA family.

This chain is Putative regulatory protein CTN_0877, found in Thermotoga neapolitana (strain ATCC 49049 / DSM 4359 / NBRC 107923 / NS-E).